The following is a 402-amino-acid chain: Queuine tRNA-ribosyltransferase-like protein (402 aa).

Belongs to the queuine tRNA-ribosyltransferase family.

The sequence is that of Queuine tRNA-ribosyltransferase-like protein from Theileria annulata.